Reading from the N-terminus, the 162-residue chain is Inner membrane protein YbjO (162 aa).

Over 1-23 (MEDETLGFFKKTSSSHARLNVPA) the chain is Periplasmic. A helical transmembrane segment spans residues 24–44 (LVQVAALAIIMIRGLDVLMIF). The Cytoplasmic portion of the chain corresponds to 45–66 (NTLGVRGIGEFIHRSVQTWSLT). A helical transmembrane segment spans residues 67–87 (LVFLSSLVLVFIEIWCAFSLV). The Periplasmic segment spans residues 88 to 94 (KGRRWAR). Residues 95-115 (WLYLLTQITAASYLWAASLGY) traverse the membrane as a helical segment. Residues 116–162 (GYPELFSIPGESKREIFHSLMLQKLPDMLILMLLFVPSTSRRFFQLQ) lie on the Cytoplasmic side of the membrane.

Its subcellular location is the cell inner membrane. The polypeptide is Inner membrane protein YbjO (ybjO) (Escherichia coli O157:H7).